Consider the following 130-residue polypeptide: NADH-quinone oxidoreductase subunit A (130 aa).

3 helical membrane passes run 15–35 (AIHV…ATII), 67–87 (FLIA…FAWA), and 95–115 (WVGL…LIYL).

Belongs to the complex I subunit 3 family. In terms of assembly, NDH-1 is composed of 14 different subunits. Subunits NuoA, H, J, K, L, M, N constitute the membrane sector of the complex.

The protein resides in the cell inner membrane. The catalysed reaction is a quinone + NADH + 5 H(+)(in) = a quinol + NAD(+) + 4 H(+)(out). Functionally, NDH-1 shuttles electrons from NADH, via FMN and iron-sulfur (Fe-S) centers, to quinones in the respiratory chain. The immediate electron acceptor for the enzyme in this species is believed to be ubiquinone. Couples the redox reaction to proton translocation (for every two electrons transferred, four hydrogen ions are translocated across the cytoplasmic membrane), and thus conserves the redox energy in a proton gradient. This chain is NADH-quinone oxidoreductase subunit A, found in Rhodopseudomonas palustris (strain BisA53).